A 1369-amino-acid polypeptide reads, in one-letter code: MESQLQSIFEEMVKTEIIEEAFAGMFMDTPEDERTKLISCLGAFRQYWSVLPQESHEQCVQWIVKFIHGQHSPKRISFLYDCLAMAVETGLLPPRMVCEALINSDSLEWERTQLWILTFKLIRKIIGGVDYKGVRDLLKVILEKIQTVPDTVSSAVVQQLLAAREVVAYILERNACLLPAYLAVTEVLKLYPEGKLPHWLLGDLVSDFVDSFRPTARIGSICGRCSLLPVVNNSGAICNSWKLDPLTLRFPLKGLLPYDKDLFEPQTALLRYVLEQPYSRDMVCNMLGLNKQHKQRCPVLEDQLVDLVVYAMERSETEEKYDDGGTSQLLWQHLSSQLIFFVLFQFASFPHMVLSLHQKLAGRGLIKGRDHLMWVLLQFISGSIQKNALADFLPVMKLFDLLYPEKECIPVPDITKPQSTHSFAMTCIWIHLNRKAQNDNSKLQIPIPHSLKLHHEFLQQSLRNKSLQMTDYKIALLCNAYSTNSECFTLPMGVLVETIYGNGNVNIPLPGSNCMASGSITPLPMNLLDSLTVHAKMSLIHSIATRVIKMAQAKSTFALAPALVETYSRLLVYMEIESLGIKGFISQLLPTVFKSHAWGILHTLLEMFSYRMHHIQPHYRVQLLSHLHSLAGVPQTNQNQLHLCVESTALRLITALGSSEVQPQFTRFLSDPKTVLSAESEELNRALILTIARATHVTDFFTGSESIQGTWCKDILQTIISFTPHNWALHTLSCFPAPLQAFFKQNNVPQESRFNLKKNVEEEYRKWKSMTNENDIITHFSLQGSPPLFLCLLWKMLLETDQINQIGYRVLERIGARALVAHVRTFADFLVYEFSTSAGGQQLNKCIEMLNDMVWKYNIVTLDRLILCLAMRSHEGNEAQVCYFIIQLLLLKPNDFRNRVSDFVKENSPEHWLQNDWHTKHMNYHKKYPEKLYFEGLAEQVNPPVQIQPQYLPIYFGNVCLRFLPVFDIVIHRFLELIPVSKSLETLLDHLGGLYKFHDRPVTYLYNTLHYYEMQLRDRTNLKRKLVHAIIGSLKDNRPQGWCLSDTYLKFGMNPRDDNPWIPDDTYYCKLIGRLVDTMAGKSPGPFPNCDWRFNEFPNPAAHALHVTCVELMALAVPGKDVGNALLNVVLKSQPLVPRENITAWMNAIGLIITALPEPYWIVLHDRIVNILNSPSLTSETEWVGYPFQLFDFTACHKAYSEMSCSYTLALAHAVWHHSSIGQLSLIPKFLPEVLIPIVKTEYQLLYVYHLIGPFLQRFQQERTRCMIEIGVAFYEMLLNVDQCSTHLSFMDPVCDFLYHMKYMFTGDSIKDQVEKIICNLRPALKLRLRHITHISTESAAPPPPPMNSGSPAPQPNQVPVSVPLTVTQ.

A disordered region spans residues Thr1337 to Gln1369. Pro residues predominate over residues Ala1341 to Asn1357.

It belongs to the Mediator complex subunit 23 family. In terms of assembly, component of the Mediator complex.

Its subcellular location is the nucleus. Component of the Mediator complex, a coactivator involved in the regulated transcription of nearly all RNA polymerase II-dependent genes. Mediator functions as a bridge to convey information from gene-specific regulatory proteins to the basal RNA polymerase II transcription machinery. Mediator is recruited to promoters by direct interactions with regulatory proteins and serves as a scaffold for the assembly of a functional preinitiation complex with RNA polymerase II and the general transcription factors. The chain is Mediator of RNA polymerase II transcription subunit 23 (med23) from Xenopus laevis (African clawed frog).